The primary structure comprises 216 residues: NADH-quinone oxidoreductase subunit C (216 aa).

Belongs to the complex I 30 kDa subunit family. NDH-1 is composed of 14 different subunits. Subunits NuoB, C, D, E, F, and G constitute the peripheral sector of the complex.

It is found in the cell inner membrane. The enzyme catalyses a quinone + NADH + 5 H(+)(in) = a quinol + NAD(+) + 4 H(+)(out). NDH-1 shuttles electrons from NADH, via FMN and iron-sulfur (Fe-S) centers, to quinones in the respiratory chain. The immediate electron acceptor for the enzyme in this species is believed to be ubiquinone. Couples the redox reaction to proton translocation (for every two electrons transferred, four hydrogen ions are translocated across the cytoplasmic membrane), and thus conserves the redox energy in a proton gradient. This Francisella tularensis subsp. holarctica (strain OSU18) protein is NADH-quinone oxidoreductase subunit C.